The following is a 44-amino-acid chain: Photosystem II reaction center protein K (44 aa).

The propeptide occupies 1–7 (METLLLS). The chain crosses the membrane as a helical span at residues 23-43 (LPIIPVFFLLLAFVWQAAIGF).

Belongs to the PsbK family. In terms of assembly, PSII is composed of 1 copy each of membrane proteins PsbA, PsbB, PsbC, PsbD, PsbE, PsbF, PsbH, PsbI, PsbJ, PsbK, PsbL, PsbM, PsbT, PsbX, PsbY, PsbZ, Psb30/Ycf12, at least 3 peripheral proteins of the oxygen-evolving complex and a large number of cofactors. It forms dimeric complexes.

It localises to the plastid. Its subcellular location is the chloroplast thylakoid membrane. Functionally, one of the components of the core complex of photosystem II (PSII). PSII is a light-driven water:plastoquinone oxidoreductase that uses light energy to abstract electrons from H(2)O, generating O(2) and a proton gradient subsequently used for ATP formation. It consists of a core antenna complex that captures photons, and an electron transfer chain that converts photonic excitation into a charge separation. The polypeptide is Photosystem II reaction center protein K (Phaeodactylum tricornutum (strain CCAP 1055/1)).